A 122-amino-acid chain; its full sequence is Short coiled-coil protein (122 aa).

Residues 1 to 26 form a disordered region; it reads MDGLNTGEEEDSAFTSISLTDDTDHS. Residues 43–101 are a coiled coil; sequence NADMDAVDAENQVELEEKTRLINQVLELQHTLEDLSARVDAVKEENLKLKSENQVLGQY.

This sequence belongs to the SCOC family. In terms of assembly, homodimer. Interacts with ARL1, ARL2 and ARL3. Directly interacts with FEZ1 and UVRAG. The interaction with UVRAG is reduced by amino acid starvation, but the complex is stabilized in the presence of FEZ1. Interacts with NRBF2.

It localises to the golgi apparatus membrane. Its subcellular location is the golgi apparatus. The protein resides in the trans-Golgi network. The protein localises to the cytoplasm. It is found in the cytosol. Its function is as follows. Positive regulator of amino acid starvation-induced autophagy. This Rattus norvegicus (Rat) protein is Short coiled-coil protein (Scoc).